We begin with the raw amino-acid sequence, 752 residues long: Cytosolic phospholipase A2 (752 aa).

The segment at 1–178 is phospholipid binding; sequence MSFIDPYQHI…MKKLLGPKKS (178 aa). S2 bears the Phosphoserine mark. One can recognise a C2 domain in the interval 6–122; that stretch reads PYQHIIVEHQ…KVGEKKEVPF (117 aa). The Ca(2+) site is built by D40, T41, D43, N65, D93, A94, and N95. A PLA2c domain is found at 140–740; that stretch reads SCPDLRFSMA…SNVEARKFFN (601 aa). The active-site Nucleophile is the S228. Phosphothreonine is present on T268. A disordered region spans residues 427–457; sequence KHIVSNDSSDSDDEAQGPKGTENEDAEREYQ. 3 positions are modified to phosphoserine: S434, S435, and S437. At S505 the chain carries Phosphoserine; by MAPK. Residues S511 and S515 each carry the phosphoserine modification. K541 participates in a covalent cross-link: Glycyl lysine isopeptide (Lys-Gly) (interchain with G-Cter in SUMO2). Catalysis depends on D549, which acts as the Proton acceptor. Residue K606 forms a Glycyl lysine isopeptide (Lys-Gly) (interchain with G-Cter in SUMO2) linkage. S727 and S729 each carry phosphoserine.

As to quaternary structure, interacts with KAT5. Post-translationally, phosphorylated at both Ser-505 and Ser-727 in response to mitogenic stimuli. In terms of tissue distribution, in brain tissue, expressed in low levels in olfactory mitral and granule cells, in hippocampal pyramidal cells and in dentate and cerebellar granule cells.

It is found in the cytoplasm. Its subcellular location is the golgi apparatus membrane. The protein localises to the nucleus envelope. The catalysed reaction is a 1,2-diacyl-sn-glycero-3-phosphocholine + H2O = a 1-acyl-sn-glycero-3-phosphocholine + a fatty acid + H(+). It carries out the reaction a 1-O-alkyl-2-acyl-sn-glycero-3-phosphocholine + H2O = a 1-O-alkyl-sn-glycero-3-phosphocholine + a fatty acid + H(+). It catalyses the reaction a 1-acyl-sn-glycero-3-phosphocholine + H2O = sn-glycerol 3-phosphocholine + a fatty acid + H(+). The enzyme catalyses 1-hexadecanoyl-2-(5Z,8Z,11Z,14Z-eicosatetraenoyl)-sn-glycero-3-phosphocholine + H2O = 1-hexadecanoyl-sn-glycero-3-phosphocholine + (5Z,8Z,11Z,14Z)-eicosatetraenoate + H(+). The catalysed reaction is 1,2-di-(5Z,8Z,11Z,14Z-eicosatetraenoyl)-sn-glycero-3-phosphocholine + H2O = 1-(5Z,8Z,11Z,14Z-eicosatetraenoyl)-sn-glycero-3-phosphocholine + (5Z,8Z,11Z,14Z)-eicosatetraenoate + H(+). It carries out the reaction 1-octadecanoyl-2-(5Z,8Z,11Z,14Z-eicosatetraenoyl)-sn-glycero-3-phosphocholine + H2O = 1-octadecanoyl-sn-glycero-3-phosphocholine + (5Z,8Z,11Z,14Z)-eicosatetraenoate + H(+). It catalyses the reaction 1-hexadecanoyl-2-(9Z,12Z-octadecadienoyl)-sn-glycero-3-phosphocholine + H2O = (9Z,12Z)-octadecadienoate + 1-hexadecanoyl-sn-glycero-3-phosphocholine + H(+). The enzyme catalyses 1-octadecanoyl-2-(9Z,12Z,15Z-octadecatrienoyl)-sn-glycero-3-phosphocholine + H2O = (9Z,12Z,15Z)-octadecatrienoate + 1-octadecanoyl-sn-glycero-3-phosphocholine + H(+). The catalysed reaction is 1-(5Z,8Z,11Z,14Z-eicosatetraenoyl)-2-hexadecanoyl-sn-glycero-3-phosphocholine + H2O = 1-(5Z,8Z,11Z,14Z-eicosatetraenoyl)-sn-glycero-3-phosphocholine + hexadecanoate + H(+). It carries out the reaction 1-O-hexadecyl-2-(5Z,8Z,11Z,14Z)-eicosatetraenoyl-sn-glycero-3-phosphocholine + H2O = 1-O-hexadecyl-sn-glycero-3-phosphocholine + (5Z,8Z,11Z,14Z)-eicosatetraenoate + H(+). It catalyses the reaction 1,2-di-(9Z-octadecenoyl)-sn-glycero-3-phospho-(1'-sn-glycerol) + H2O = 1-(9Z-octadecenoyl)-sn-glycero-3-phospho-(1'-sn-glycerol) + (9Z)-octadecenoate + H(+). The enzyme catalyses 1-octadecanoyl-2-(5Z,8Z,11Z,14Z-eicosatetraenoyl)-sn-glycero-3-phosphate + H2O = 1-octadecanoyl-sn-glycero-3-phosphate + (5Z,8Z,11Z,14Z)-eicosatetraenoate + H(+). The catalysed reaction is 1-hexadecanoyl-sn-glycero-3-phosphocholine + H2O = sn-glycerol 3-phosphocholine + hexadecanoate + H(+). It carries out the reaction 2-(prostaglandin E2)-sn-glycero-3-phosphoethanolamine + H2O = sn-glycero-3-phosphoethanolamine + prostaglandin E2 + H(+). It catalyses the reaction 2-[(15S)-hydroxy-(5Z,8Z,11Z,13E)-eicosatetraenoyl]-sn-glycero-3-phosphocholine + H2O = (15S)-hydroxy-(5Z,8Z,11Z,13E)-eicosatetraenoate + sn-glycerol 3-phosphocholine + H(+). The enzyme catalyses 2-[(15R)-hydroxy-(5Z,8Z,11Z,13E)-eicosatetraenoyl]-sn-glycero-3-phosphocholine + H2O = (15R)-hydroxy-(5Z,8Z,11Z,13E)-eicosatetraenoate + sn-glycerol 3-phosphocholine + H(+). The catalysed reaction is 2-(prostaglandin E2)-sn-glycero-3-phosphocholine + H2O = prostaglandin E2 + sn-glycerol 3-phosphocholine + H(+). It carries out the reaction 2-[(11R)-hydroxy-(5Z,8Z,12E,14Z)-eicosatetraenoyl]-sn-glycero-3-phosphocholine + H2O = (11R)-hydroxy-(5Z,8Z,12E,14Z)-eicosatetraenoate + sn-glycerol 3-phosphocholine + H(+). It catalyses the reaction 1-(5Z,8Z,11Z,14Z-eicosatetraenoyl)-2-O-hexadecyl-sn-glycero-3-phosphocholine + H2O = 2-O-hexadecyl-sn-glycero-3-phosphocholine + (5Z,8Z,11Z,14Z)-eicosatetraenoate + H(+). The enzyme catalyses 1-octadecanoyl-2-(5Z,8Z,11Z,14Z-eicosatetraenoyl)-sn-glycero-3-phosphocholine + glycerol = 1-(5Z,8Z,11Z,14Z-eicosatetraenoyl)-glycerol + 1-octadecanoyl-sn-glycero-3-phosphocholine. The catalysed reaction is 1-octadecanoyl-2-(9Z,12Z,15Z-octadecatrienoyl)-sn-glycero-3-phosphocholine + glycerol = 1-(9Z,12Z,15Z-octadecatrienoyl)-glycerol + 1-octadecanoyl-sn-glycero-3-phosphocholine. It participates in lipid metabolism; arachidonate metabolism. It functions in the pathway membrane lipid metabolism; glycerophospholipid metabolism. Its pathway is lipid metabolism; prostaglandin biosynthesis. The protein operates within lipid metabolism; leukotriene B4 biosynthesis. Activated by cytosolic calcium, which is necessary for binding to membrane lipids. Activated by phosphorylation in response to mitogenic stimuli. Functionally, has primarily calcium-dependent phospholipase and lysophospholipase activities, with a major role in membrane lipid remodeling and biosynthesis of lipid mediators of the inflammatory response. Plays an important role in embryo implantation and parturition through its ability to trigger prostanoid production. Preferentially hydrolyzes the ester bond of the fatty acyl group attached at sn-2 position of phospholipids (phospholipase A2 activity). Selectively hydrolyzes sn-2 arachidonoyl group from membrane phospholipids, providing the precursor for eicosanoid biosynthesis via the cyclooxygenase pathway. In an alternative pathway of eicosanoid biosynthesis, hydrolyzes sn-2 fatty acyl chain of eicosanoid lysophopholipids to release free bioactive eicosanoids. Hydrolyzes the ester bond of the fatty acyl group attached at sn-1 position of phospholipids (phospholipase A1 activity) only if an ether linkage rather than an ester linkage is present at the sn-2 position. This hydrolysis is not stereospecific. Has calcium-independent phospholipase A2 and lysophospholipase activities in the presence of phosphoinositides. Has O-acyltransferase activity. Catalyzes the transfer of fatty acyl chains from phospholipids to a primary hydroxyl group of glycerol (sn-1 or sn-3), potentially contributing to monoacylglycerol synthesis. The polypeptide is Cytosolic phospholipase A2 (Pla2g4a) (Rattus norvegicus (Rat)).